The following is a 1276-amino-acid chain: Probable histone acetyltransferase HAC-like 3 (1276 aa).

The tract at residues 391–421 (VDRAEQTSNSTVSKPTSPASDGSSGKHYPAK) is disordered. A compositionally biased stretch (polar residues) spans 396–413 (QTSNSTVSKPTSPASDGS). The PHD-type zinc finger occupies 621–689 (SSICGRCHHL…EYTCAKCFLK (69 aa)). The CBP/p300-type HAT domain occupies 704–1130 (ILGARELPRT…ILYHLHDSTC (427 aa)). Residues 827–829 (IDS), 846–847 (RT), and Trp902 each bind acetyl-CoA. The stretch at 953-973 (EAERLLEKKDDDTSQKKETQL) forms a coiled coil. ZZ-type zinc fingers lie at residues 1013–1076 (CLQQ…EEPL) and 1125–1187 (LHDS…LQDY). Residues Cys1018, Cys1021, Cys1033, Cys1036, Cys1042, Cys1045, His1058, His1066, Cys1130, Cys1133, Cys1145, Cys1148, Cys1154, Cys1157, His1168, and His1177 each coordinate Zn(2+). The segment at 1177-1260 (HVLQKYTLQD…DCSAPRCRDI (84 aa)) adopts a TAZ-type zinc-finger fold.

It localises to the nucleus. It carries out the reaction L-lysyl-[protein] + acetyl-CoA = N(6)-acetyl-L-lysyl-[protein] + CoA + H(+). In terms of biological role, acetyltransferase enzyme. Acetylates histones, giving a specific tag for transcriptional activation. This is Probable histone acetyltransferase HAC-like 3 from Oryza sativa subsp. japonica (Rice).